Reading from the N-terminus, the 411-residue chain is Keratin, type I cytoskeletal 12 (411 aa).

The head stretch occupies residues 1–42 (DHDYEFPGIQAFAGLGMGFGGSPGGGSLYLPSGNDGGLLSGS). Residues 43–78 (EKETMQNLNDRLASYLDKVRALEDANAELENKIREW) are coil 1A. The region spanning 43–359 (EKETMQNLND…RLLDGEAQGD (317 aa)) is the IF rod domain. Residues 83–101 (GHGHGDCGPQHDYSKYHPL) form a linker 1 region. The coil 1B stretch occupies residues 102–193 (IEDLRNKIIS…KNHEEELQSC (92 aa)). Positions 194 to 216 (RAGGPGEVSVEMDAAPGVDLTRL) are linker 12. The tract at residues 217–354 (LNDMRAQYEA…IETYRRLLDG (138 aa)) is coil 2. A tail region spans residues 355–411 (EAQGDGLDESSAMTGSRSQAQSIDSSKDPSKTRKIKTIVQEVVNGEVVSSQVQEIQN). The interval 356–387 (AQGDGLDESSAMTGSRSQAQSIDSSKDPSKTR) is disordered. Residues 365–378 (SAMTGSRSQAQSID) are compositionally biased toward polar residues.

This sequence belongs to the intermediate filament family. As to quaternary structure, heterotetramer of two type I and two type II keratins. Keratin-3 associates with keratin-12. Cornea specific. Associated mainly with all layers of the central corneal epithelium and also found in the suprabasal limbal epithelium.

Functionally, involved in corneal epithelium organization, integrity and corneal keratin expression. This is Keratin, type I cytoskeletal 12 (KRT12) from Oryctolagus cuniculus (Rabbit).